Consider the following 319-residue polypeptide: N-acetyl-D-glucosamine kinase (319 aa).

Thr-14 lines the ATP pocket. The substrate site is built by Asn-37 and Asp-113. Position 135 (Thr-135) interacts with ATP. Substrate contacts are provided by residues 153–155 (GWG) and Asp-160. Ala-220 contributes to the ATP binding site.

The protein belongs to the eukaryotic-type N-acetylglucosamine kinase family. Homodimer.

The catalysed reaction is N-acetyl-D-glucosamine + ATP = N-acetyl-D-glucosamine 6-phosphate + ADP + H(+). In terms of biological role, converts N-acetylglucosamine (GlcNAc), a major component of complex carbohydrates, into GlcNAc 6-phosphate. Also has ManNAc kinase activity. This Dictyostelium discoideum (Social amoeba) protein is N-acetyl-D-glucosamine kinase (nagk).